The chain runs to 948 residues: ATPase 8, plasma membrane-type (948 aa).

Over 1–64 the chain is Cytoplasmic; that stretch reads MATEFSWDEI…EKSENKFLKF (64 aa). The helical transmembrane segment at 65–84 threads the bilayer; sequence LGFMWNPLSWVMESAAIMAI. The Extracellular segment spans residues 85–96; that stretch reads VLANGGGKAPDW. A helical transmembrane segment spans residues 97 to 117; it reads QDFIGIMVLLIINSTISFIEE. Residues 118-246 are Cytoplasmic-facing; the sequence is NNAGNAAAAL…GHFQKVLTSI (129 aa). The chain crosses the membrane as a helical span at residues 247–267; that stretch reads GNFCICSIGLGMLIEILIMYP. At 268-276 the chain is on the extracellular side; the sequence is IQHRTYRDG. Residues 277 to 294 traverse the membrane as a helical segment; it reads IDNLLVLLIGGIPIAMPT. Topologically, residues 295–646 are cytoplasmic; the sequence is VLSVTMAIGS…TSRAIFQRMK (352 aa). Residue D332 is the 4-aspartylphosphate intermediate of the active site. Mg(2+) is bound by residues D591 and D595. The chain crosses the membrane as a helical span at residues 647–668; it reads NYTIYAVSITIRIVLGFMLVAL. Residues 669–673 lie on the Extracellular side of the membrane; it reads IWRFD. The chain crosses the membrane as a helical span at residues 674–696; the sequence is FAPFMVLIIAILNDGTIMTISKD. The Cytoplasmic segment spans residues 697–712; it reads RVKPSPVPDSWKLNEI. A helical membrane pass occupies residues 713–733; sequence FATGVVLGTYMALTTVLFFWL. Topologically, residues 734–754 are extracellular; it reads AHDTDFFSKTFGVRSIQGNEE. The chain crosses the membrane as a helical span at residues 755 to 775; the sequence is ELMAALYLQVSIISQALIFVT. Residues 776 to 787 lie on the Cytoplasmic side of the membrane; sequence RSRSWSFVERPG. A helical membrane pass occupies residues 788 to 808; the sequence is FLLLIAFVIAQLVATLIAVYA. Topologically, residues 809–816 are extracellular; sequence NWGFARIV. Residues 817–837 form a helical membrane-spanning segment; that stretch reads GCGWGWAGGIWVYSIITYIPL. Residues 838–948 are Cytoplasmic-facing; sequence DILKFIIRYA…IDTIQQHYTV (111 aa). T884 carries the phosphothreonine modification. S930 carries the post-translational modification Phosphoserine. The interaction with 14-3-3 proteins stretch occupies residues 946-948; that stretch reads YTV. T947 bears the Phosphothreonine mark.

The protein belongs to the cation transport ATPase (P-type) (TC 3.A.3) family. Type IIIA subfamily. Binds to 14-3-3 proteins. The binding is induced by phosphorylation of Thr-947. Binding to 14-3-3 proteins activates the H(+)-ATPase. As to expression, expressed in guard cells, roots and leaves, and barely in mesophyll cells.

It is found in the membrane. The enzyme catalyses ATP + H2O + H(+)(in) = ADP + phosphate + 2 H(+)(out). Functionally, the plasma membrane H(+) ATPase of plants and fungi generates a proton gradient that drives the active transport of nutrients by H(+)-symport. The resulting external acidification and/or internal alkinization may mediate growth responses. This chain is ATPase 8, plasma membrane-type (AHA8), found in Arabidopsis thaliana (Mouse-ear cress).